The sequence spans 530 residues: DEK domain-containing chromatin-associated protein 2 (530 aa).

Basic and acidic residues-rich tracts occupy residues 1-47 and 57-68; these read MATE…AEEE and AKEGELGEKDKE. A disordered region spans residues 1–130; it reads MATETLDEKT…PSKSVSIEKG (130 aa). A coiled-coil region spans residues 41–61; sequence IGEAEEEKKEDEEEGEAKEGE. Acidic residues predominate over residues 69 to 82; that stretch reads DDVESEEEEEEEEG. Composition is skewed to basic and acidic residues over residues 83 to 93 and 100 to 110; these read SGSKKSSEKET and RPTRERKKVER. A coiled-coil region spans residues 185 to 205; the sequence is EKEEEKQRARIKEKIDKCVKE. The segment at 246–430 is disordered; sequence IIADQEKAKK…GKAKAEPTRK (185 aa). The segment covering 253 to 263 has biased composition (basic residues); that stretch reads AKKRKSTPKRG. Residues 260 to 267 carry the Nuclear localization signal 1 motif; the sequence is PKRGKSGE. Positions 286–332 are enriched in acidic residues; sequence SDTEEGKDEGDADSEGTNDPHEEDDAAPEEESDHEKTDTDDEKDEVE. 2 short sequence motifs (nuclear localization signal) span residues 343-350 and 384-391; these read SKKTVEES and AKKQKVDH. Over residues 374-384 the composition is skewed to polar residues; the sequence is KQIAKSTSSPA. Over residues 387-397 the composition is skewed to basic and acidic residues; sequence QKVDHVESSKE. The region spanning 426 to 481 is the DEK-C domain; the sequence is EPTRKEMLEVVSKILKEVDFNTATLSDILQKLSDHFGVELSHRKPEVKDVITEAIN. DNA-binding regions lie at residues 444 to 458 and 473 to 477; these read DFNT…QKLS and KDVIT. Positions 482 to 530 are disordered; that stretch reads AMTDDEEEDEEEEAEAGSDKEKEEVKGEEEEEKAEAESDKEKEKEEPKD. Over residues 484-497 the composition is skewed to acidic residues; sequence TDDEEEDEEEEAEA. Residues 492–527 are a coiled coil; sequence EEEAEAGSDKEKEEVKGEEEEEKAEAESDKEKEKEE. Positions 516–530 are enriched in basic and acidic residues; the sequence is EAESDKEKEKEEPKD.

As to quaternary structure, found in a mRNA splicing-dependent exon junction complex (EJC). Binds specifically histones H3 and H4.

It is found in the nucleus. The protein resides in the nucleolus. Its function is as follows. Chromatin-associated protein which contributes to the modulation of chromatin structure (such as super-helical structure of DNA) and function. Binds to chromatin of protein-coding genes throughout the genome to regulate nucleosome occupancy and chromatin accessibility, and to modulate the expression of target genes. The polypeptide is DEK domain-containing chromatin-associated protein 2 (Arabidopsis thaliana (Mouse-ear cress)).